The sequence spans 405 residues: uncharacterized protein (405 aa).

Disordered stretches follow at residues 1 to 21 (MSKKVNKNASPKNNSDSESKT), 150 to 179 (IKDESDSDSDDEDTKKKKKNTKNKGKQEGP), and 285 to 405 (DDED…KSRS). Polar residues predominate over residues 7-16 (KNASPKNNSD). Composition is skewed to acidic residues over residues 312-331 (SDDEDSDNEKEKEKEEDDEE) and 349-358 (DDEDDEEEGE). Basic residues-rich tracts occupy residues 365 to 374 (SSKKSSKKAS) and 390 to 405 (PKKKSSKAKSPSKSRS).

This is an uncharacterized protein from Acanthamoeba polyphaga (Amoeba).